Here is a 260-residue protein sequence, read N- to C-terminus: Thiamine thiazole synthase (260 aa).

Residues Ala36, 55–56 (EQ), Gly63, and 154–156 (HVD) each bind NAD(+). Fe cation is bound by residues Asp156 and His171. Met224 is a binding site for NAD(+). Residue Arg234 participates in glycine binding.

The protein belongs to the THI4 family. As to quaternary structure, homooctamer; tetramer of dimers. Fe(2+) is required as a cofactor.

It carries out the reaction hydrogen sulfide + glycine + NAD(+) = ADP-5-ethyl-4-methylthiazole-2-carboxylate + nicotinamide + 3 H2O + H(+). It functions in the pathway cofactor biosynthesis; thiamine diphosphate biosynthesis. Its function is as follows. Involved in the biosynthesis of the thiazole moiety of thiamine. Catalyzes the conversion of NAD and glycine to adenosine diphosphate 5-(2-hydroxyethyl)-4-methylthiazole-2-carboxylate (ADT), an adenylated thiazole intermediate, using free sulfide as a source of sulfur. In Methanosarcina mazei (strain ATCC BAA-159 / DSM 3647 / Goe1 / Go1 / JCM 11833 / OCM 88) (Methanosarcina frisia), this protein is Thiamine thiazole synthase.